The chain runs to 64 residues: Beta-insect depressant toxin BmKIT4 (64 aa).

The LCN-type CS-alpha/beta domain maps to 1-61 (DGYIRGSNGC…TWKSESNTCG (61 aa)). 4 disulfide bridges follow: Cys-10-Cys-60, Cys-14-Cys-35, Cys-21-Cys-42, and Cys-25-Cys-44. Cys-60 is modified (cysteine amide).

This sequence belongs to the long (4 C-C) scorpion toxin superfamily. Sodium channel inhibitor family. Beta subfamily. In terms of tissue distribution, expressed by the venom gland.

It localises to the secreted. In terms of biological role, depressant insect beta-toxins cause a transient contraction paralysis followed by a slow flaccid paralysis. They bind voltage-independently at site-4 of sodium channels (Nav) and shift the voltage of activation toward more negative potentials thereby affecting sodium channel activation and promoting spontaneous and repetitive firing. This toxin is active only on insects. The chain is Beta-insect depressant toxin BmKIT4 from Olivierus martensii (Manchurian scorpion).